Reading from the N-terminus, the 121-residue chain is Small ribosomal subunit protein uS13 (121 aa).

Residues 93-121 form a disordered region; the sequence is RGLPMRGQRTRTNARTRKGPRKAAQSLKK.

The protein belongs to the universal ribosomal protein uS13 family. In terms of assembly, part of the 30S ribosomal subunit. Forms a loose heterodimer with protein S19. Forms two bridges to the 50S subunit in the 70S ribosome.

Located at the top of the head of the 30S subunit, it contacts several helices of the 16S rRNA. In the 70S ribosome it contacts the 23S rRNA (bridge B1a) and protein L5 of the 50S subunit (bridge B1b), connecting the 2 subunits; these bridges are implicated in subunit movement. Contacts the tRNAs in the A and P-sites. The protein is Small ribosomal subunit protein uS13 of Albidiferax ferrireducens (strain ATCC BAA-621 / DSM 15236 / T118) (Rhodoferax ferrireducens).